Consider the following 446-residue polypeptide: MKFPASVIASVFLFVAETAAALYLSSTYRSAGDRMWQVLTLLFSLMPCALVQFTLLFVHRDLSRDRPLALLMHLLQLGPLYRCCEVFCIYCQSDQNEEPYVSITKKRQMPKDGLSEEVEKEVGQAEGKLITHRSAFSRASVIQAFLGSAPQLTLQLYITVLEQNITTGRCFIMTLSLLSIVYGALRCNILAIKIKYDEYEVKVKPLAYVCIFLWRSFEIATRVIVLVLFTSVLKIWVVAVILVNFFSFFLYPWIVFWCSGSPFPENIEKALSRVGTTIVLCFLTLLYAGINMFCWSAVQLKIDNPELISKSQNWYRLLIYYMTRFIENSVLLLLWYFFKTDIYMYVCAPLLILQLLIGYCTGILFMLVFYQFFHPCKKLFSSSVSESFRALLRCACWSSLRRKSSEPVGRIDTDLKACTEQDVMPTTSKVIPEATDIWTAVDLCSA.

Residues methionine 1–lysine 2 lie on the Cytoplasmic side of the membrane. A helical membrane pass occupies residues phenylalanine 3–tyrosine 23. The Extracellular portion of the chain corresponds to leucine 24 to glutamine 37. Residues valine 38 to valine 58 form a helical membrane-spanning segment. The Cytoplasmic portion of the chain corresponds to histidine 59 to leucine 68. Residues alanine 69–isoleucine 89 traverse the membrane as a helical segment. The Extracellular portion of the chain corresponds to tyrosine 90–serine 140. Residue serine 115 is modified to Phosphoserine. The helical transmembrane segment at valine 141–leucine 161 threads the bilayer. At glutamate 162–phenylalanine 171 the chain is on the cytoplasmic side. A helical membrane pass occupies residues isoleucine 172–isoleucine 192. The Extracellular segment spans residues lysine 193–tyrosine 208. The helical transmembrane segment at valine 209–phenylalanine 229 threads the bilayer. Residues threonine 230–isoleucine 235 lie on the Cytoplasmic side of the membrane. The helical transmembrane segment at tryptophan 236–phenylalanine 256 threads the bilayer. Topologically, residues tryptophan 257–threonine 277 are extracellular. A helical membrane pass occupies residues isoleucine 278 to valine 298. At glutamine 299 to leucine 317 the chain is on the cytoplasmic side. A helical membrane pass occupies residues leucine 318 to phenylalanine 338. Residues lysine 339–proline 349 lie on the Extracellular side of the membrane. A helical membrane pass occupies residues leucine 350–tyrosine 370. Residues glutamine 371–alanine 446 are Cytoplasmic-facing.

It belongs to the XK family. Heterodimer with Kell; disulfide-linked. Interacts with VPS13A.

Its subcellular location is the endoplasmic reticulum membrane. In terms of biological role, recruits the lipid transfer protein VPS13A from lipid droplets to the endoplasmic reticulum (ER) membrane. The sequence is that of Endoplasmic reticulum membrane adapter protein XK from Mus musculus (Mouse).